An 819-amino-acid chain; its full sequence is Nuclear pore complex protein Nup93 (819 aa).

Position 49 is a phosphothreonine (threonine 49). 7 positions are modified to phosphoserine: serine 52, serine 66, serine 72, serine 75, serine 80, serine 430, and serine 767.

This sequence belongs to the nucleoporin interacting component (NIC) family. Part of the nuclear pore complex (NPC). Component of the p62 complex, a complex composed of NUP62 and NUP54. Forms a complex with NUP35, NUP155, NUP205 and lamin B; the interaction with NUP35 is direct. Does not interact with TPR. Interacts with SMAD4 and IPO7; translocates SMAD4 to the nucleus through the NPC upon BMP7 stimulation resulting in activation of SMAD4 signaling.

Its subcellular location is the nucleus membrane. It is found in the nucleus. The protein localises to the nuclear pore complex. It localises to the nucleus envelope. In terms of biological role, plays a role in the nuclear pore complex (NPC) assembly and/or maintenance. May anchor nucleoporins, but not NUP153 and TPR, to the NPC. During renal development, regulates podocyte migration and proliferation through SMAD4 signaling. This Rattus norvegicus (Rat) protein is Nuclear pore complex protein Nup93 (Nup93).